Here is a 224-residue protein sequence, read N- to C-terminus: Elongation factor Ts (224 aa).

Residues T81–V84 form an involved in Mg(2+) ion dislocation from EF-Tu region.

It belongs to the EF-Ts family.

Its subcellular location is the cytoplasm. Its function is as follows. Associates with the EF-Tu.GDP complex and induces the exchange of GDP to GTP. It remains bound to the aminoacyl-tRNA.EF-Tu.GTP complex up to the GTP hydrolysis stage on the ribosome. This chain is Elongation factor Ts, found in Finegoldia magna (strain ATCC 29328 / DSM 20472 / WAL 2508) (Peptostreptococcus magnus).